A 346-amino-acid chain; its full sequence is tRNA N6-adenosine threonylcarbamoyltransferase (346 aa).

Fe cation is bound by residues H111 and H115. Residues 134–138 (LVSGG), D167, G180, and N279 contribute to the substrate site. Position 307 (D307) interacts with Fe cation.

Belongs to the KAE1 / TsaD family. The cofactor is Fe(2+).

Its subcellular location is the cytoplasm. It carries out the reaction L-threonylcarbamoyladenylate + adenosine(37) in tRNA = N(6)-L-threonylcarbamoyladenosine(37) in tRNA + AMP + H(+). Its function is as follows. Required for the formation of a threonylcarbamoyl group on adenosine at position 37 (t(6)A37) in tRNAs that read codons beginning with adenine. Is involved in the transfer of the threonylcarbamoyl moiety of threonylcarbamoyl-AMP (TC-AMP) to the N6 group of A37, together with TsaE and TsaB. TsaD likely plays a direct catalytic role in this reaction. This is tRNA N6-adenosine threonylcarbamoyltransferase from Burkholderia ambifaria (strain ATCC BAA-244 / DSM 16087 / CCUG 44356 / LMG 19182 / AMMD) (Burkholderia cepacia (strain AMMD)).